The sequence spans 583 residues: GTP diphosphokinase CRSH1, chloroplastic (583 aa).

A compositionally biased stretch (low complexity) spans 1 to 13 (MATAATTSAAAIP). Positions 1–68 (MATAATTSAA…SSSSSTPAEG (68 aa)) are disordered. The N-terminal 69 residues, 1–69 (MATAATTSAA…SSSSTPAEGG (69 aa)), are a transit peptide targeting the chloroplast. The segment covering 19-39 (RRQHPHPRRPGLRPRRLHRLR) has biased composition (basic residues). The span at 40–66 (LPAQAAAAAAASSPSTSSSSSSSSTPA) shows a compositional bias: low complexity. The HD domain maps to 119–219 (ALARALAIAA…LELALKLDMM (101 aa)). EF-hand domains are found at residues 473–508 (GDSNCTNRAFCQLDKNGDGRISIEELTEVMEDLGAG) and 510–542 (KDAKELMHLLDANSDGSLSSDEFEAFQRQIELM). Ca(2+) contacts are provided by Asp-486, Asn-488, Asp-490, Arg-492, Glu-497, Asp-520, Asn-522, Asp-524, Ser-526, and Glu-531.

The protein belongs to the RelA/SpoT family. In terms of tissue distribution, expressed in roots and shoots.

The protein localises to the plastid. The protein resides in the chloroplast. The enzyme catalyses GTP + ATP = guanosine 3'-diphosphate 5'-triphosphate + AMP. With respect to regulation, activated by calcium. Its function is as follows. Possesses calcium-dependent ppGpp (guanosine 3'-diphosphate 5'-diphosphate) synthetase activity in vitro and is able to functionally complement E.coli relA mutants. May be involved in a rapid plant ppGpp-mediated response to pathogens and other stresses. The chain is GTP diphosphokinase CRSH1, chloroplastic from Oryza sativa subsp. japonica (Rice).